The primary structure comprises 355 residues: DNA-binding protein RHL1 (355 aa).

Disordered stretches follow at residues 1-26, 181-215, and 229-355; these read MVRA…KQRK, DFQG…VDNE, and IQVT…SSKA. Over residues 14-23 the composition is skewed to basic and acidic residues; the sequence is GGDKDDAESK. Composition is skewed to low complexity over residues 230 to 246 and 260 to 274; these read QVTP…VTPV and AETS…SEGN. Composition is skewed to basic and acidic residues over residues 281–296 and 309–326; these read KPLL…REES and LPEE…KDSK. Over residues 344-355 the composition is skewed to low complexity; it reads AGTSKAKSSSKA.

Interacts with BIN4 and TOP6A, but not with TOP6B. As to expression, expressed inproliferating and endoreduplicating cells.

The protein localises to the nucleus. In terms of biological role, component of the DNA topoisomerase VI complex involved in chromatin organization and progression of endoreduplication cycles. Binds to DNA. Required for endoreduplication beyond 8C. In Arabidopsis thaliana (Mouse-ear cress), this protein is DNA-binding protein RHL1 (RHL1).